Reading from the N-terminus, the 344-residue chain is Heat-inducible transcription repressor HrcA (344 aa).

Belongs to the HrcA family.

Functionally, negative regulator of class I heat shock genes (grpE-dnaK-dnaJ and groELS operons). Prevents heat-shock induction of these operons. The polypeptide is Heat-inducible transcription repressor HrcA (Geobacillus sp. (strain WCH70)).